Reading from the N-terminus, the 489-residue chain is Cysteine--tRNA ligase (489 aa).

Residue C27 coordinates Zn(2+). The 'HIGH' region signature appears at 29–39 (VTVYDLCHLGH). C211, H236, and E240 together coordinate Zn(2+). Positions 268–272 (KMSKS) match the 'KMSKS' region motif. K271 provides a ligand contact to ATP.

It belongs to the class-I aminoacyl-tRNA synthetase family. As to quaternary structure, monomer. The cofactor is Zn(2+).

It localises to the cytoplasm. It carries out the reaction tRNA(Cys) + L-cysteine + ATP = L-cysteinyl-tRNA(Cys) + AMP + diphosphate. This chain is Cysteine--tRNA ligase, found in Prochlorococcus marinus (strain AS9601).